The primary structure comprises 243 residues: Transcription factor TFIIS homolog (243 aa).

The TFIIS central domain occupies 77–201 (MRDIIQMMFF…SQQKVAEKTS (125 aa)). Residues 202 to 242 (QLYKCPNCKQRMCTYREVQTRALDEPSTIFCTCKKCGHEFI) form a TFIIS-type zinc finger. The Zn(2+) site is built by C206, C209, C234, and C237.

It belongs to the TFS-II family.

Functionally, putative initiation factor. Necessary for efficient transcription elongation past template-encoded arresting sites. This chain is Transcription factor TFIIS homolog, found in Ornithodoros (relapsing fever ticks).